An 873-amino-acid chain; its full sequence is Bifunctional heparan sulfate N-deacetylase/N-sulfotransferase 3 (873 aa).

At 1-13 (MSFIMKPHRHFQR) the chain is on the cytoplasmic side. The chain crosses the membrane as a helical; Signal-anchor for type II membrane protein span at residues 14–34 (TLILLATFCMVSIIISAYYLY). The Lumenal portion of the chain corresponds to 35-873 (SGYKQESEVS…WLRQELQKVR (839 aa)). The segment at 36 to 589 (GYKQESEVSG…KRHRDIWSKE (554 aa)) is heparan sulfate N-deacetylase 3. 4 N-linked (GlcNAc...) asparagine glycosylation sites follow: Asn146, Asn226, Asn342, and Asn392. A heparan sulfate N-sulfotransferase 3 region spans residues 590–873 (KTCDRLPKFL…WLRQELQKVR (284 aa)). Lys605 acts as the For sulfotransferase activity in catalysis. Residue 605–609 (KTGTT) coordinates 3'-phosphoadenylyl sulfate. Residue Asn658 is glycosylated (N-linked (GlcNAc...) asparagine). A 3'-phosphoadenylyl sulfate-binding site is contributed by Ser703. N-linked (GlcNAc...) asparagine glycosylation is present at Asn794. Cys809 and Cys819 form a disulfide bridge. 824–828 (KGRKY) contacts 3'-phosphoadenylyl sulfate.

Belongs to the sulfotransferase 1 family. NDST subfamily. In terms of assembly, monomer. Strongly expressed strongly in brain. Expressed at high level at embryonic day 11 compared to other stages of development. Weakly expressed in adult heart, kidney, muscle, endothelial cells and testis but not in other tissues.

The protein resides in the golgi apparatus membrane. The enzyme catalyses alpha-D-glucosaminyl-[heparan sulfate](n) + 3'-phosphoadenylyl sulfate = N-sulfo-alpha-D-glucosaminyl-[heparan sulfate](n) + adenosine 3',5'-bisphosphate + 2 H(+). It participates in glycan metabolism; heparan sulfate biosynthesis. The protein operates within glycan metabolism; heparin biosynthesis. In terms of biological role, essential bifunctional enzyme that catalyzes both the N-deacetylation and the N-sulfation of glucosamine (GlcNAc) of the glycosaminoglycan in heparan sulfate. Modifies the GlcNAc-GlcA disaccharide repeating sugar backbone to make N-sulfated heparosan, a prerequisite substrate for later modifications in heparin biosynthesis. Has high deacetylase activity but low sulfotransferase activity. The chain is Bifunctional heparan sulfate N-deacetylase/N-sulfotransferase 3 (Ndst3) from Mus musculus (Mouse).